The chain runs to 301 residues: uncharacterized protein (301 aa).

Residues 1-21 form the signal peptide; the sequence is MKIKLILVLIVFLTIVNVNNS. N-linked (GlcNAc...) asparagine glycosylation is found at N19, N59, N102, and N180.

The protein localises to the secreted. This is an uncharacterized protein from Dictyostelium discoideum (Social amoeba).